Reading from the N-terminus, the 64-residue chain is Palmitoyl-CoA hydrolase (64 aa).

Belongs to the type-B carboxylesterase/lipase family. In terms of assembly, monomer and homotrimer.

It localises to the microsome. It is found in the endoplasmic reticulum. The enzyme catalyses hexadecanoyl-CoA + H2O = hexadecanoate + CoA + H(+). Its function is as follows. Hydrolysis of a variety of CoA thioesters of long-chain fatty acids. This Rattus norvegicus (Rat) protein is Palmitoyl-CoA hydrolase.